A 170-amino-acid polypeptide reads, in one-letter code: Large ribosomal subunit protein uL22z (170 aa).

The protein belongs to the universal ribosomal protein uL22 family.

This is Large ribosomal subunit protein uL22z from Hordeum vulgare (Barley).